Reading from the N-terminus, the 325-residue chain is Phenylalanine--tRNA ligase alpha subunit (325 aa).

A Mg(2+)-binding site is contributed by Glu-251.

It belongs to the class-II aminoacyl-tRNA synthetase family. Phe-tRNA synthetase alpha subunit type 1 subfamily. In terms of assembly, tetramer of two alpha and two beta subunits. It depends on Mg(2+) as a cofactor.

The protein resides in the cytoplasm. The enzyme catalyses tRNA(Phe) + L-phenylalanine + ATP = L-phenylalanyl-tRNA(Phe) + AMP + diphosphate + H(+). The sequence is that of Phenylalanine--tRNA ligase alpha subunit from Thermotoga petrophila (strain ATCC BAA-488 / DSM 13995 / JCM 10881 / RKU-1).